A 119-amino-acid chain; its full sequence is Putative F420H(2)-dependent quinone reductase Rv3178 (119 aa).

Residues 21 to 23 (RKS), 27 to 32 (FVAPLL), 43 to 46 (VASA), and 54 to 58 (QWYRN) each bind coenzyme F420-(gamma-Glu)n.

This sequence belongs to the F420H(2)-dependent quinone reductase family.

The protein localises to the cell membrane. The catalysed reaction is oxidized coenzyme F420-(gamma-L-Glu)(n) + a quinol + H(+) = reduced coenzyme F420-(gamma-L-Glu)(n) + a quinone. Its function is as follows. Involved in a F420-dependent anti-oxidant mechanism that protects M.tuberculosis against oxidative stress and bactericidal agents. Catalyzes the F420H(2)-dependent two-electron reduction of quinones to dihydroquinones, thereby preventing the formation of cytotoxic semiquinones obtained by the one-electron reduction pathway. Since menaquinone is the sole quinone electron carrier in the respiratory chain in M.tuberculosis, the physiological electron acceptor for Fqr-mediated F420H(2) oxidation is therefore likely to be the endogenous menaquinone found in the membrane fraction of M.tuberculosis. This is Putative F420H(2)-dependent quinone reductase Rv3178 from Mycobacterium tuberculosis (strain ATCC 25618 / H37Rv).